The sequence spans 469 residues: Uronate isomerase (469 aa).

It belongs to the metallo-dependent hydrolases superfamily. Uronate isomerase family.

It carries out the reaction D-glucuronate = D-fructuronate. The enzyme catalyses aldehydo-D-galacturonate = keto-D-tagaturonate. It participates in carbohydrate metabolism; pentose and glucuronate interconversion. The polypeptide is Uronate isomerase (Yersinia pseudotuberculosis serotype O:1b (strain IP 31758)).